Reading from the N-terminus, the 381-residue chain is Early boundary activity protein 2 (381 aa).

A disordered region spans residues 210–245; the sequence is NDAEDVPAPPSKRPRHMSTSSSESHIPDTASEKDEK. The 98-residue stretch at 268 to 365 folds into the BEN domain; the sequence is PNGTQITAHQ…TKCADTAKKY (98 aa).

In terms of assembly, the heterotrimeric Elba complex consists of Elba1, Elba2 and Elba3.

The protein localises to the nucleus. Its function is as follows. The heterotrimeric Elba complex is required for chromatin domain boundary function during early embryogenesis. It binds to a 8-bp sequence 5'-CCAATAAG-3' in the Fab-7 insulator or boundary element in the bithorax complex and contributes to its insulator or boundary activity. Elba2 can act as a transcriptional repressor and binds the palindromic sequence 5'-CCAATTGG-3' to mediate transcriptional repression. The chain is Early boundary activity protein 2 from Drosophila melanogaster (Fruit fly).